A 453-amino-acid chain; its full sequence is Trigger factor (453 aa).

Residues 171-256 (GDRVTVSFKG…ATLVEAPKDT (86 aa)) enclose the PPIase FKBP-type domain.

This sequence belongs to the FKBP-type PPIase family. Tig subfamily.

It is found in the cytoplasm. The enzyme catalyses [protein]-peptidylproline (omega=180) = [protein]-peptidylproline (omega=0). Its function is as follows. Involved in protein export. Acts as a chaperone by maintaining the newly synthesized protein in an open conformation. Functions as a peptidyl-prolyl cis-trans isomerase. This Rhodopseudomonas palustris (strain BisA53) protein is Trigger factor.